Consider the following 628-residue polypeptide: Glutamyl-tRNA(Gln) amidotransferase subunit E (628 aa).

The protein belongs to the GatB/GatE family. GatE subfamily. As to quaternary structure, heterodimer of GatD and GatE.

It catalyses the reaction L-glutamyl-tRNA(Gln) + L-glutamine + ATP + H2O = L-glutaminyl-tRNA(Gln) + L-glutamate + ADP + phosphate + H(+). Functionally, allows the formation of correctly charged Gln-tRNA(Gln) through the transamidation of misacylated Glu-tRNA(Gln) in organisms which lack glutaminyl-tRNA synthetase. The reaction takes place in the presence of glutamine and ATP through an activated gamma-phospho-Glu-tRNA(Gln). The GatDE system is specific for glutamate and does not act on aspartate. This chain is Glutamyl-tRNA(Gln) amidotransferase subunit E, found in Pyrococcus furiosus (strain ATCC 43587 / DSM 3638 / JCM 8422 / Vc1).